The sequence spans 464 residues: Kynurenine 3-monooxygenase (464 aa).

This sequence belongs to the aromatic-ring hydroxylase family. KMO subfamily. FAD serves as cofactor.

It carries out the reaction L-kynurenine + NADPH + O2 + H(+) = 3-hydroxy-L-kynurenine + NADP(+) + H2O. It participates in cofactor biosynthesis; NAD(+) biosynthesis; quinolinate from L-kynurenine: step 1/3. Its function is as follows. Catalyzes the hydroxylation of L-kynurenine (L-Kyn) to form 3-hydroxy-L-kynurenine (L-3OHKyn). Required for synthesis of quinolinic acid. The protein is Kynurenine 3-monooxygenase of Myxococcus xanthus (strain DK1622).